Consider the following 421-residue polypeptide: Enolase (421 aa).

Gln-162 contributes to the (2R)-2-phosphoglycerate binding site. Glu-204 (proton donor) is an active-site residue. Residues Asp-241, Glu-284, and Asp-311 each contribute to the Mg(2+) site. Positions 336, 365, 366, and 387 each coordinate (2R)-2-phosphoglycerate. The Proton acceptor role is filled by Lys-336.

The protein belongs to the enolase family. Requires Mg(2+) as cofactor.

It localises to the cytoplasm. It is found in the secreted. The protein localises to the cell surface. It catalyses the reaction (2R)-2-phosphoglycerate = phosphoenolpyruvate + H2O. The protein operates within carbohydrate degradation; glycolysis; pyruvate from D-glyceraldehyde 3-phosphate: step 4/5. Functionally, catalyzes the reversible conversion of 2-phosphoglycerate (2-PG) into phosphoenolpyruvate (PEP). It is essential for the degradation of carbohydrates via glycolysis. The protein is Enolase of Nautilia profundicola (strain ATCC BAA-1463 / DSM 18972 / AmH).